Here is a 643-residue protein sequence, read N- to C-terminus: 1-deoxy-D-xylulose-5-phosphate synthase (643 aa).

Thiamine diphosphate is bound by residues His78 and 119–121 (AHS). Asp150 lines the Mg(2+) pocket. Thiamine diphosphate is bound by residues 151-152 (GS), Asn179, Tyr288, and Glu370. Position 179 (Asn179) interacts with Mg(2+).

The protein belongs to the transketolase family. DXPS subfamily. Homodimer. It depends on Mg(2+) as a cofactor. The cofactor is thiamine diphosphate.

It catalyses the reaction D-glyceraldehyde 3-phosphate + pyruvate + H(+) = 1-deoxy-D-xylulose 5-phosphate + CO2. Its pathway is metabolic intermediate biosynthesis; 1-deoxy-D-xylulose 5-phosphate biosynthesis; 1-deoxy-D-xylulose 5-phosphate from D-glyceraldehyde 3-phosphate and pyruvate: step 1/1. Its function is as follows. Catalyzes the acyloin condensation reaction between C atoms 2 and 3 of pyruvate and glyceraldehyde 3-phosphate to yield 1-deoxy-D-xylulose-5-phosphate (DXP). The protein is 1-deoxy-D-xylulose-5-phosphate synthase of Brucella melitensis biotype 2 (strain ATCC 23457).